The chain runs to 571 residues: Glutamate--tRNA ligase (571 aa).

Residues 110–120 (PNPNGPGTLGS) carry the 'HIGH' region motif.

The protein belongs to the class-I aminoacyl-tRNA synthetase family. Glutamate--tRNA ligase type 2 subfamily.

It is found in the cytoplasm. The catalysed reaction is tRNA(Glu) + L-glutamate + ATP = L-glutamyl-tRNA(Glu) + AMP + diphosphate. In terms of biological role, catalyzes the attachment of glutamate to tRNA(Glu) in a two-step reaction: glutamate is first activated by ATP to form Glu-AMP and then transferred to the acceptor end of tRNA(Glu). The protein is Glutamate--tRNA ligase of Methanosarcina acetivorans (strain ATCC 35395 / DSM 2834 / JCM 12185 / C2A).